A 513-amino-acid chain; its full sequence is Cytochrome P450 4d10 (513 aa).

2 residues coordinate heme: E317 and C457.

Belongs to the cytochrome P450 family. It depends on heme as a cofactor.

It localises to the endoplasmic reticulum membrane. The protein localises to the microsome membrane. In terms of biological role, may play an important role in the maintenance of specific insect-host plant relationships. May be involved in xenobiotic metabolism. This chain is Cytochrome P450 4d10 (Cyp4d10), found in Drosophila mettleri (Fruit fly).